Consider the following 235-residue polypeptide: MKIMIACGLVAAALFTLTSGQSLAADAPFEGRKKCSSCHKAQAQSWKDTAHAKAMESLKPNVKKEAKQKAKLDPAKDYTQDKDCVGCHVDGFGQKGGYTIESPKPMLTGVGCESCHGPGRNFRGDHRKSGQAFEKSGKKTPRKDLAKKGQDFHFEERCSACHLNYEGSPWKGAKAPYTPFTPEVDAKYTFKFDEMVKEVKAMHEHYKLEGVFEGEPKFKFHDEFQASAKPAKKGK.

The N-terminal stretch at 1-24 (MKIMIACGLVAAALFTLTSGQSLA) is a signal peptide. Heme is bound by residues C35, C38, H39, H51, C84, C87, H88, C112, C115, H116, H126, C158, C161, H162, and H203. A disordered region spans residues 121–144 (NFRGDHRKSGQAFEKSGKKTPRKD).

In terms of processing, binds 4 heme groups per subunit.

It is found in the periplasm. Involved in ammonia oxidation; accepts electrons directly from hydroxylamine oxidoreductase (HAO). This Nitrosomonas europaea (strain ATCC 19718 / CIP 103999 / KCTC 2705 / NBRC 14298) protein is Cytochrome c-554 (cycA1).